We begin with the raw amino-acid sequence, 35 residues long: Basic endochitinase CH1 (35 aa).

It belongs to the glycosyl hydrolase 19 family. Chitinase class I subfamily.

It carries out the reaction Random endo-hydrolysis of N-acetyl-beta-D-glucosaminide (1-&gt;4)-beta-linkages in chitin and chitodextrins.. Functionally, defense against chitin-containing fungal pathogens. This chain is Basic endochitinase CH1, found in Castanea sativa (Sweet chestnut).